A 104-amino-acid chain; its full sequence is MPGIRKGDTVKIISGKEKGKQGKVLELLPEKGRVRIEKLMLVKRHQKKGRSQATPEGGIIEKEGTVAISNVMVLVGDKPVRREKIKRELGAKEKARADRRKTAK.

A compositionally biased stretch (basic and acidic residues) spans 85–96 (IKRELGAKEKAR). The disordered stretch occupies residues 85 to 104 (IKRELGAKEKARADRRKTAK).

It belongs to the universal ribosomal protein uL24 family. Part of the 50S ribosomal subunit.

Functionally, one of two assembly initiator proteins, it binds directly to the 5'-end of the 23S rRNA, where it nucleates assembly of the 50S subunit. In terms of biological role, one of the proteins that surrounds the polypeptide exit tunnel on the outside of the subunit. The chain is Large ribosomal subunit protein uL24 from Anaeromyxobacter sp. (strain Fw109-5).